A 120-amino-acid polypeptide reads, in one-letter code: MITKPIKNVARKKRHAHVRRTITGTPERPRLNVFRSSKHIYAQLIDDVNGVTVAAASSLDKELKLENGGNVEAAKKVGELVAKRALEKGYKTIVFDRGGYVYHGRVASLADAAREAGLQF.

This sequence belongs to the universal ribosomal protein uL18 family. Part of the 50S ribosomal subunit; part of the 5S rRNA/L5/L18/L25 subcomplex. Contacts the 5S and 23S rRNAs.

Functionally, this is one of the proteins that bind and probably mediate the attachment of the 5S RNA into the large ribosomal subunit, where it forms part of the central protuberance. This Halalkalibacterium halodurans (strain ATCC BAA-125 / DSM 18197 / FERM 7344 / JCM 9153 / C-125) (Bacillus halodurans) protein is Large ribosomal subunit protein uL18.